Consider the following 616-residue polypeptide: Chaperone protein HscA homolog (616 aa).

It belongs to the heat shock protein 70 family.

Its function is as follows. Chaperone involved in the maturation of iron-sulfur cluster-containing proteins. Has a low intrinsic ATPase activity which is markedly stimulated by HscB. The polypeptide is Chaperone protein HscA homolog (Tolumonas auensis (strain DSM 9187 / NBRC 110442 / TA 4)).